The following is a 437-amino-acid chain: Enolase (437 aa).

Glutamine 162 is a binding site for (2R)-2-phosphoglycerate. Glutamate 204 acts as the Proton donor in catalysis. 3 residues coordinate Mg(2+): aspartate 251, glutamate 297, and aspartate 324. (2R)-2-phosphoglycerate contacts are provided by lysine 349, arginine 378, serine 379, and lysine 400. Lysine 349 serves as the catalytic Proton acceptor.

This sequence belongs to the enolase family. It depends on Mg(2+) as a cofactor.

It is found in the cytoplasm. The protein localises to the secreted. It localises to the cell surface. The enzyme catalyses (2R)-2-phosphoglycerate = phosphoenolpyruvate + H2O. Its pathway is carbohydrate degradation; glycolysis; pyruvate from D-glyceraldehyde 3-phosphate: step 4/5. Catalyzes the reversible conversion of 2-phosphoglycerate (2-PG) into phosphoenolpyruvate (PEP). It is essential for the degradation of carbohydrates via glycolysis. This is Enolase from Prosthecochloris aestuarii (strain DSM 271 / SK 413).